Reading from the N-terminus, the 345-residue chain is MKFSKLASKLGSETITCSLEKINHLDPDIQGVAAIDEAKPGTLSYIEGAKFANYLKTTNASALILPMDETLQKLAGERGIGWLSSKEPRLLFAQAIALFYRPFQPTPEIHATSIVHPTAKVGKNVYLGAHVVVEAGVKIGDNVCIYPNVVIYPNVEIGENTILNANCSIHERSQIGKGCVIHSGAVIGGEGFGFVPTPEGWFKMEQSGKVILEDGVEVGGNTTIDRPAVGETRIGKNTKLDNLVQIGHGCKIGKNCALAAQVGLAGGVKLGDNVILAGQVGVANQAKIGDRAIATAQAGVHNDVAAGEIVSSSPAVPNKIYLKASAIYKRLPEIYQFVKQMKRKL.

The Proton acceptor role is filled by His248.

It belongs to the transferase hexapeptide repeat family. LpxD subfamily. As to quaternary structure, homotrimer.

It catalyses the reaction a UDP-3-O-[(3R)-3-hydroxyacyl]-alpha-D-glucosamine + a (3R)-hydroxyacyl-[ACP] = a UDP-2-N,3-O-bis[(3R)-3-hydroxyacyl]-alpha-D-glucosamine + holo-[ACP] + H(+). It participates in bacterial outer membrane biogenesis; LPS lipid A biosynthesis. Functionally, catalyzes the N-acylation of UDP-3-O-acylglucosamine using 3-hydroxyacyl-ACP as the acyl donor. Is involved in the biosynthesis of lipid A, a phosphorylated glycolipid that anchors the lipopolysaccharide to the outer membrane of the cell. The chain is UDP-3-O-acylglucosamine N-acyltransferase from Trichodesmium erythraeum (strain IMS101).